A 146-amino-acid chain; its full sequence is Hemoglobin subunit beta-1/2 (146 aa).

In terms of domain architecture, Globin spans 2-146; the sequence is EWTDKERSII…VVSALGKQYH (145 aa). The heme b site is built by histidine 63 and histidine 92.

It belongs to the globin family. As to quaternary structure, hb1 is a heterotetramer of two alpha-1 chains and two beta chains. Hb2 is a heterotetramer of two alpha-2 chains and two beta chains. In terms of tissue distribution, red blood cells.

In terms of biological role, involved in oxygen transport from gills to the various peripheral tissues. This Trematomus newnesi (Dusky notothen) protein is Hemoglobin subunit beta-1/2.